The chain runs to 230 residues: MKQVRLLPSATVRAACAVAVAAFAAGCAQIPRDPIIQQPMTAQPPTPMSMQAPGSIYNPGYAGRPLFEDQRPRNVGDILTIMIAENINATKSSGANTNRQGNTDFNVPTAGFLGGLFAKANLSATGNNKFAATGGASAANTFNGTITVTVTNVLPNGNLVVSGEKQMLINQGNEFVRFSGVVNPNTISGANSVYSTQVADAKIEYSAKGYINEAETMGWLQRFFLNIAPW.

An N-terminal signal peptide occupies residues 1-26; sequence MKQVRLLPSATVRAACAVAVAAFAAG. The N-palmitoyl cysteine moiety is linked to residue cysteine 27. Cysteine 27 carries the S-diacylglycerol cysteine lipid modification.

Belongs to the FlgH family. The basal body constitutes a major portion of the flagellar organelle and consists of four rings (L,P,S, and M) mounted on a central rod.

The protein resides in the cell outer membrane. The protein localises to the bacterial flagellum basal body. In terms of biological role, assembles around the rod to form the L-ring and probably protects the motor/basal body from shearing forces during rotation. The chain is Flagellar L-ring protein from Burkholderia lata (strain ATCC 17760 / DSM 23089 / LMG 22485 / NCIMB 9086 / R18194 / 383).